The sequence spans 215 residues: MHDYQKAFIEFAIQREVLKFGQFTLKSGRSSPYFFNAGLFNTSTTLAQIGHFYAAALTSSPLQYDMLFGPAYKGIPLVSALAVTLANEKSMDVPYAFNRKEAKAHGEGGVIVGAPLKGKVLIVDDVITAGTAIREVISIIKANGAEPAGVLIALDRQERGQHQLSAIQEIEQNYQIPVTAIIQLDQILEFLKSDPHFSDNYKQVAEYRAVYGVQS.

A 5-phospho-alpha-D-ribose 1-diphosphate-binding site is contributed by lysine 26. Residue 34-35 (FF) coordinates orotate. 5-phospho-alpha-D-ribose 1-diphosphate-binding positions include 72–73 (YK), arginine 99, lysine 100, lysine 103, histidine 105, and 124–132 (DDVITAGTA). 2 residues coordinate orotate: threonine 128 and arginine 156.

This sequence belongs to the purine/pyrimidine phosphoribosyltransferase family. PyrE subfamily. In terms of assembly, homodimer. Mg(2+) is required as a cofactor.

The enzyme catalyses orotidine 5'-phosphate + diphosphate = orotate + 5-phospho-alpha-D-ribose 1-diphosphate. It functions in the pathway pyrimidine metabolism; UMP biosynthesis via de novo pathway; UMP from orotate: step 1/2. Catalyzes the transfer of a ribosyl phosphate group from 5-phosphoribose 1-diphosphate to orotate, leading to the formation of orotidine monophosphate (OMP). The protein is Orotate phosphoribosyltransferase of Hahella chejuensis (strain KCTC 2396).